A 635-amino-acid chain; its full sequence is Ligand-gated ion channel 4 (635 aa).

The N-terminal stretch at 1–24 is a signal peptide; sequence MIICYSCLTVSILLTIKFVPCRFA. The Extracellular segment spans residues 25–324; sequence GIEHQNTKSR…IHMHRRPLFY (300 aa). N46, N139, N177, and N225 each carry an N-linked (GlcNAc...) asparagine glycan. A disulfide bridge connects residues C238 and C252. N282 carries N-linked (GlcNAc...) asparagine glycosylation. 3 consecutive transmembrane segments (helical) span residues 325 to 345, 355 to 375, and 381 to 401; these read VFNH…GFLM, MIIT…ESIP, and VPLI…ATCV. The Cytoplasmic segment spans residues 402–599; it reads NVITLNMHRN…QQLASVVDRL (198 aa). A helical transmembrane segment spans residues 600 to 620; that stretch reads LLCLFCTATLFTIICLLIVPV. N625 is a glycosylation site (N-linked (GlcNAc...) asparagine).

Belongs to the ligand-gated ion channel (TC 1.A.9) family.

The protein localises to the postsynaptic cell membrane. The protein resides in the cell membrane. Its function is as follows. Possible acetylcholine receptor. This chain is Ligand-gated ion channel 4 (lgc-4), found in Caenorhabditis elegans.